Here is a 213-residue protein sequence, read N- to C-terminus: LexA repressor 2 (213 aa).

The H-T-H motif DNA-binding region spans 27-47; sequence QTEIARAFGFKGVRAAQYHLE. Active-site for autocatalytic cleavage activity residues include Ser133 and Lys170.

It belongs to the peptidase S24 family. As to quaternary structure, homodimer.

The catalysed reaction is Hydrolysis of Ala-|-Gly bond in repressor LexA.. In terms of biological role, represses a number of genes involved in the response to DNA damage (SOS response), including recA and lexA. In the presence of single-stranded DNA, RecA interacts with LexA causing an autocatalytic cleavage which disrupts the DNA-binding part of LexA, leading to derepression of the SOS regulon and eventually DNA repair. The polypeptide is LexA repressor 2 (Xanthomonas oryzae pv. oryzae (strain KACC10331 / KXO85)).